The chain runs to 308 residues: Palmitoyltransferase ZDHHC7 (308 aa).

Topologically, residues 1-50 are cytoplasmic; that stretch reads MQPSGHRLRDIEHHPLLTDNDNYDSASSSSSEADMADRVWFIRDGCGMVC. Residues 51–71 form a helical membrane-spanning segment; sequence AVMTWLLVVYADFVVTFVMLL. At 72–75 the chain is on the lumenal side; that stretch reads PSKD. Residues 76–96 form a helical membrane-spanning segment; it reads FWYSVVNGVLFNCLAVLALSS. Over 97-173 the chain is Cytoplasmic; it reads HLRTMLTDPG…NNCVGEKNQR (77 aa). Positions 130–180 constitute a DHHC domain; the sequence is YKCPKCCCIKPERAHHCSICKRCIRKMDHHCPWVNNCVGEKNQRFFVLFTM. Catalysis depends on C160, which acts as the S-palmitoyl cysteine intermediate. Residues 174-194 form a helical membrane-spanning segment; it reads FFVLFTMYIALSSIHALILCG. Residues 195–217 are Lumenal-facing; sequence LQFISCVRGQWTECSDFSPPITV. A helical transmembrane segment spans residues 218 to 238; that stretch reads ILLVFLCLEGLLFFTFTAVMF. Residues 239-308 lie on the Cytoplasmic side of the membrane; it reads GTQIHSICND…TRKGGPEFSV (70 aa).

The protein belongs to the DHHC palmitoyltransferase family. In terms of assembly, homooligomers. Heterooligomers with ZDHHC3. Autopalmitoylated. In terms of tissue distribution, widely expressed. Present in Sertoli cells (at protein level).

Its subcellular location is the golgi apparatus membrane. It catalyses the reaction L-cysteinyl-[protein] + hexadecanoyl-CoA = S-hexadecanoyl-L-cysteinyl-[protein] + CoA. The enzyme catalyses L-cysteinyl-[protein] + tetradecanoyl-CoA = S-tetradecanoyl-L-cysteinyl-[protein] + CoA. It carries out the reaction L-cysteinyl-[protein] + octadecanoyl-CoA = S-octadecanoyl-L-cysteinyl-[protein] + CoA. Functionally, golgi-localized palmitoyltransferase that catalyzes the addition of palmitate onto various protein substrates and therefore functions in several unrelated biological processes. Has no stringent fatty acid selectivity and in addition to palmitate can also transfer onto target proteins myristate from tetradecanoyl-CoA and stearate from octadecanoyl-CoA. Palmitoylates sex steroid hormone receptors, including ESR1, PGR and AR, thereby regulating their targeting to the plasma membrane and their function in rapid intracellular signaling upon binding of sex hormones. Palmitoylates GNAQ, a heterotrimeric G protein, regulating its dynamic localization at the plasma membrane and is thereby involved in GNAQ-dependent G protein-coupled receptor signaling pathways. Also functions in ligand-induced cell death by regulating the FAS signaling pathway through the palmitoylation and stabilization of the receptor at the plasma membrane. In epithelial cells, palmitoylates SCRIB and regulates its localization to the plasma membrane, regulating indirectly cell polarity and differentiation. Also palmitoylates JAM3 and promotes its expression at tight junctions and regulates its function in cell migration. Palmitoylates the glucose transporter GLUT4/SLC2A4 and controls the insulin-dependent translocation of GLUT4 to the plasma membrane. In brain, could also palmitoylate SNAP25 and DLG4/PSD95. Could also palmitoylate DNAJC5 and regulate its localization to the Golgi membrane. Could also palmitoylate NCDN. May play a role in follicle stimulation hormone (FSH) activation of testicular Sertoli cells. Activates pyroptosis by catalyzing palmitoylation of gasdermin-D (GSDMD). This is Palmitoyltransferase ZDHHC7 from Rattus norvegicus (Rat).